Consider the following 87-residue polypeptide: Phosphoribosyl-ATP pyrophosphatase (87 aa).

Belongs to the PRA-PH family.

It localises to the cytoplasm. The catalysed reaction is 1-(5-phospho-beta-D-ribosyl)-ATP + H2O = 1-(5-phospho-beta-D-ribosyl)-5'-AMP + diphosphate + H(+). It functions in the pathway amino-acid biosynthesis; L-histidine biosynthesis; L-histidine from 5-phospho-alpha-D-ribose 1-diphosphate: step 2/9. The protein is Phosphoribosyl-ATP pyrophosphatase of Beutenbergia cavernae (strain ATCC BAA-8 / DSM 12333 / CCUG 43141 / JCM 11478 / NBRC 16432 / NCIMB 13614 / HKI 0122).